The sequence spans 201 residues: Bradykinin potentiating and C-type natriuretic peptides (201 aa).

An N-terminal signal peptide occupies residues 1 to 23; that stretch reads MFVSRLAASGLLLLALLAVSLDG. Residues 24–47 constitute a propeptide that is removed on maturation; that stretch reads KPVQQWSQNWPGPKVPPLVVQQWS. A Pyrrolidone carboxylic acid modification is found at Gln48. The propeptide occupies 58–60; it reads LVV. Gln61 is subject to Pyrrolidone carboxylic acid. 2 propeptides span residues 67–95 and 107–179; these read TQLQ…AALD and GSKA…LAKK. The disordered stretch occupies residues 90–172; it reads PDAALDTPPA…GGGGGGGARR (83 aa). The segment covering 120 to 130 has biased composition (low complexity); it reads SKGASATSTAS. Basic and acidic residues predominate over residues 132–142; that stretch reads PMRDLRTDGKQ. Gly residues predominate over residues 159–170; that stretch reads PGGGGGGGGGGA. A disulfide bond links Cys185 and Cys201.

The protein in the N-terminal section; belongs to the bradykinin-potentiating peptide family. This sequence in the central section; belongs to the bradykinin inhibitor peptide family. In the C-terminal section; belongs to the natriuretic peptide family. As to expression, venom gland.

The protein localises to the secreted. Functionally, inhibits the activity of the angiotensin-converting enzyme (ACE) by a preferential interaction with its C-domain. May also potentiate the hypotensive effects of bradykinin. Antagonizes the vasodilatory actions of bradykinin at the B2 bradykinin receptor. In terms of biological role, has a vasorelaxant activity in rat aortic strips and a diuretic potency in anesthetized rats. May act by activating natriuretic receptors (NPR1 and/or NPR2). This is Bradykinin potentiating and C-type natriuretic peptides from Sistrurus catenatus edwardsii (Desert massasauga).